The following is a 111-amino-acid chain: Probable 4-amino-4-deoxy-L-arabinose-phosphoundecaprenol flippase subunit ArnE (111 aa).

3 helical membrane passes run 38 to 58, 61 to 81, and 91 to 111; these read LWLG…LLVL, LPVG…TLAA, and PRHW…GSAA. The EamA domain maps to 40 to 109; the sequence is LGLALICMGA…IISGIIILGS (70 aa).

This sequence belongs to the ArnE family. Heterodimer of ArnE and ArnF.

The protein localises to the cell inner membrane. Its pathway is bacterial outer membrane biogenesis; lipopolysaccharide biosynthesis. In terms of biological role, translocates 4-amino-4-deoxy-L-arabinose-phosphoundecaprenol (alpha-L-Ara4N-phosphoundecaprenol) from the cytoplasmic to the periplasmic side of the inner membrane. The sequence is that of Probable 4-amino-4-deoxy-L-arabinose-phosphoundecaprenol flippase subunit ArnE from Salmonella newport (strain SL254).